Reading from the N-terminus, the 448-residue chain is Trigger factor (448 aa).

The PPIase FKBP-type domain maps to 172–257 (GDRVTVDFVG…MKKIEWPHMP (86 aa)).

The protein belongs to the FKBP-type PPIase family. Tig subfamily.

Its subcellular location is the cytoplasm. It catalyses the reaction [protein]-peptidylproline (omega=180) = [protein]-peptidylproline (omega=0). Functionally, involved in protein export. Acts as a chaperone by maintaining the newly synthesized protein in an open conformation. Functions as a peptidyl-prolyl cis-trans isomerase. In Burkholderia vietnamiensis (strain G4 / LMG 22486) (Burkholderia cepacia (strain R1808)), this protein is Trigger factor.